Reading from the N-terminus, the 158-residue chain is NADPH-dependent 7-cyano-7-deazaguanine reductase (158 aa).

Residue cysteine 56 is the Thioimide intermediate of the active site. Aspartate 63 acts as the Proton donor in catalysis. Substrate is bound by residues leucine 78–serine 80 and histidine 97–glutamate 98.

This sequence belongs to the GTP cyclohydrolase I family. QueF type 1 subfamily.

The protein localises to the cytoplasm. The enzyme catalyses 7-aminomethyl-7-carbaguanine + 2 NADP(+) = 7-cyano-7-deazaguanine + 2 NADPH + 3 H(+). The protein operates within tRNA modification; tRNA-queuosine biosynthesis. Catalyzes the NADPH-dependent reduction of 7-cyano-7-deazaguanine (preQ0) to 7-aminomethyl-7-deazaguanine (preQ1). The sequence is that of NADPH-dependent 7-cyano-7-deazaguanine reductase from Rhodopseudomonas palustris (strain TIE-1).